The following is a 314-amino-acid chain: MTEHNEDPQIERVADDAADEEAVTEPLATESKDEPAEHPEFEGPRRRARRERAERRAAQARATAIEQARRAAKRRARGQIVSEQNPAKPAARGVVRGLKALLATVVLAVVGIGLGLALYFTPAMSAREIVIIGIGAVSREEVLDAARVRPATPLLQIDTQQVADRVATIRRVASARVQRQYPSALRITIVERVPVVVKDFSDGPHLFDRDGVDFATDPPPPALPYFDVDNPGPSDPTTKAALQVLTALHPEVASQVGRIAAPSVASITLTLADGRVVIWGTTDRCEEKAEKLAALLTQPGRTYDVSSPDLPTVK.

Basic and acidic residues-rich tracts occupy residues 1 to 15 (MTEHNEDPQIERVAD) and 30 to 57 (ESKDEPAEHPEFEGPRRRARRERAERRA). Residues 1–57 (MTEHNEDPQIERVADDAADEEAVTEPLATESKDEPAEHPEFEGPRRRARRERAERRA) are disordered. Residues 1–99 (MTEHNEDPQI…AARGVVRGLK (99 aa)) are Cytoplasmic-facing. Residues 100–120 (ALLATVVLAVVGIGLGLALYF) traverse the membrane as a helical segment. Residues 121 to 314 (TPAMSAREIV…VSSPDLPTVK (194 aa)) lie on the Extracellular side of the membrane. The region spanning 124–192 (MSAREIVIIG…SALRITIVER (69 aa)) is the POTRA domain.

The protein belongs to the FtsQ/DivIB family. FtsQ subfamily.

It is found in the cell membrane. Its function is as follows. Essential cell division protein. The protein is Cell division protein FtsQ of Mycobacterium bovis (strain ATCC BAA-935 / AF2122/97).